The sequence spans 244 residues: 23S rRNA (guanosine-2'-O-)-methyltransferase RlmB (244 aa).

S-adenosyl-L-methionine is bound by residues glycine 196, isoleucine 216, and leucine 225.

This sequence belongs to the class IV-like SAM-binding methyltransferase superfamily. RNA methyltransferase TrmH family. RlmB subfamily. Homodimer.

It localises to the cytoplasm. The enzyme catalyses guanosine(2251) in 23S rRNA + S-adenosyl-L-methionine = 2'-O-methylguanosine(2251) in 23S rRNA + S-adenosyl-L-homocysteine + H(+). Specifically methylates the ribose of guanosine 2251 in 23S rRNA. In Pectobacterium atrosepticum (strain SCRI 1043 / ATCC BAA-672) (Erwinia carotovora subsp. atroseptica), this protein is 23S rRNA (guanosine-2'-O-)-methyltransferase RlmB.